The sequence spans 842 residues: Elongation factor 2 (842 aa).

The tr-type G domain maps to 17–346 (TNVRNMSVIA…MIVMHLPSPV (330 aa)). Residues 26 to 33 (AHVDHGKS), 158 to 161 (NKVD), and 213 to 215 (SGL) contribute to the GTP site. His-699 carries the diphthamide modification.

This sequence belongs to the TRAFAC class translation factor GTPase superfamily. Classic translation factor GTPase family. EF-G/EF-2 subfamily.

It is found in the cytoplasm. It catalyses the reaction GTP + H2O = GDP + phosphate + H(+). In terms of biological role, catalyzes the GTP-dependent ribosomal translocation step during translation elongation. During this step, the ribosome changes from the pre-translocational (PRE) to the post-translocational (POST) state as the newly formed A-site-bound peptidyl-tRNA and P-site-bound deacylated tRNA move to the P and E sites, respectively. Catalyzes the coordinated movement of the two tRNA molecules, the mRNA and conformational changes in the ribosome. The chain is Elongation factor 2 (EFT1) from Candida glabrata (strain ATCC 2001 / BCRC 20586 / JCM 3761 / NBRC 0622 / NRRL Y-65 / CBS 138) (Yeast).